The chain runs to 320 residues: ATP-dependent 6-phosphofructokinase (320 aa).

Gly12 serves as a coordination point for ATP. 22-26 (RGVVR) lines the ADP pocket. ATP-binding positions include 73-74 (RF) and 103-106 (GDGS). Mg(2+) is bound at residue Asp104. 126–128 (TID) is a binding site for substrate. Asp128 functions as the Proton acceptor in the catalytic mechanism. Arg155 contributes to the ADP binding site. Substrate contacts are provided by residues Arg163 and 170–172 (MGR). Residues 186–188 (GCE), Lys212, and 214–216 (KKH) each bind ADP. Residues Glu223, Arg244, and 250–253 (HIQR) each bind substrate.

This sequence belongs to the phosphofructokinase type A (PFKA) family. ATP-dependent PFK group I subfamily. Prokaryotic clade 'B1' sub-subfamily. In terms of assembly, homotetramer. Mg(2+) serves as cofactor.

It localises to the cytoplasm. The enzyme catalyses beta-D-fructose 6-phosphate + ATP = beta-D-fructose 1,6-bisphosphate + ADP + H(+). It participates in carbohydrate degradation; glycolysis; D-glyceraldehyde 3-phosphate and glycerone phosphate from D-glucose: step 3/4. With respect to regulation, allosterically activated by ADP and other diphosphonucleosides, and allosterically inhibited by phosphoenolpyruvate. In terms of biological role, catalyzes the phosphorylation of D-fructose 6-phosphate to fructose 1,6-bisphosphate by ATP, the first committing step of glycolysis. The sequence is that of ATP-dependent 6-phosphofructokinase from Edwardsiella ictaluri (strain 93-146).